The chain runs to 128 residues: Probable 4-amino-4-deoxy-L-arabinose-phosphoundecaprenol flippase subunit ArnF (128 aa).

Residues 1–2 lie on the Cytoplasmic side of the membrane; sequence MG. A helical membrane pass occupies residues 3–23; it reads LIWGLFSVIIASVAQLSLGFA. At 24-35 the chain is on the periplasmic side; sequence ASHLPPMTHLWD. A helical transmembrane segment spans residues 36 to 56; it reads FIAALLAFGLDARILLLGLLG. The Cytoplasmic segment spans residues 57–76; that stretch reads YLLSVFCWYKTLHKLALSKA. Residues 77–97 form a helical membrane-spanning segment; that stretch reads YALLSMSYVLVWIASMVLPGW. Topologically, residues 98–100 are periplasmic; the sequence is EGT. The chain crosses the membrane as a helical span at residues 101-121; that stretch reads FSLKALLGVACIMSGLMLIFL. Residues 122–128 are Cytoplasmic-facing; it reads PTTKQRY.

Belongs to the ArnF family. In terms of assembly, heterodimer of ArnE and ArnF.

The protein resides in the cell inner membrane. It participates in bacterial outer membrane biogenesis; lipopolysaccharide biosynthesis. Translocates 4-amino-4-deoxy-L-arabinose-phosphoundecaprenol (alpha-L-Ara4N-phosphoundecaprenol) from the cytoplasmic to the periplasmic side of the inner membrane. The sequence is that of Probable 4-amino-4-deoxy-L-arabinose-phosphoundecaprenol flippase subunit ArnF from Shigella boydii serotype 4 (strain Sb227).